Reading from the N-terminus, the 446-residue chain is N-succinylarginine dihydrolase (446 aa).

Substrate contacts are provided by residues 19–28, asparagine 110, and 137–138; these read AGLSFGNVAS and HR. Residue glutamate 174 is part of the active site. Arginine 213 contacts substrate. The active site involves histidine 249. Residues aspartate 251 and asparagine 364 each coordinate substrate. The active-site Nucleophile is cysteine 370.

Belongs to the succinylarginine dihydrolase family. As to quaternary structure, homodimer.

It catalyses the reaction N(2)-succinyl-L-arginine + 2 H2O + 2 H(+) = N(2)-succinyl-L-ornithine + 2 NH4(+) + CO2. It participates in amino-acid degradation; L-arginine degradation via AST pathway; L-glutamate and succinate from L-arginine: step 2/5. In terms of biological role, catalyzes the hydrolysis of N(2)-succinylarginine into N(2)-succinylornithine, ammonia and CO(2). The protein is N-succinylarginine dihydrolase of Burkholderia cenocepacia (strain HI2424).